The primary structure comprises 728 residues: 1,4-alpha-glucan branching enzyme GlgB (728 aa).

Residue Asp-405 is the Nucleophile of the active site. Catalysis depends on Glu-458, which acts as the Proton donor.

This sequence belongs to the glycosyl hydrolase 13 family. GlgB subfamily. Monomer.

It catalyses the reaction Transfers a segment of a (1-&gt;4)-alpha-D-glucan chain to a primary hydroxy group in a similar glucan chain.. It functions in the pathway glycan biosynthesis; glycogen biosynthesis. Functionally, catalyzes the formation of the alpha-1,6-glucosidic linkages in glycogen by scission of a 1,4-alpha-linked oligosaccharide from growing alpha-1,4-glucan chains and the subsequent attachment of the oligosaccharide to the alpha-1,6 position. This is 1,4-alpha-glucan branching enzyme GlgB from Escherichia coli O157:H7.